The following is a 312-amino-acid chain: Ornithine carbamoyltransferase (312 aa).

Residues 57–60 (STRT), Q84, R108, and 135–138 (HPCQ) contribute to the carbamoyl phosphate site. L-ornithine contacts are provided by residues N166, D226, and 230-231 (SM). Carbamoyl phosphate is bound by residues 265–266 (CL) and R293.

Belongs to the aspartate/ornithine carbamoyltransferase superfamily. OTCase family.

It localises to the cytoplasm. It carries out the reaction carbamoyl phosphate + L-ornithine = L-citrulline + phosphate + H(+). It functions in the pathway amino-acid biosynthesis; L-arginine biosynthesis; L-arginine from L-ornithine and carbamoyl phosphate: step 1/3. In terms of biological role, reversibly catalyzes the transfer of the carbamoyl group from carbamoyl phosphate (CP) to the N(epsilon) atom of ornithine (ORN) to produce L-citrulline. The protein is Ornithine carbamoyltransferase of Brucella ovis (strain ATCC 25840 / 63/290 / NCTC 10512).